Reading from the N-terminus, the 316-residue chain is Acetaldehyde dehydrogenase (316 aa).

11–14 (SGNI) provides a ligand contact to NAD(+). Cys131 serves as the catalytic Acyl-thioester intermediate. NAD(+) is bound by residues 162-170 (SAGPGTRAN) and Asn289.

The protein belongs to the acetaldehyde dehydrogenase family. Interacts with MhpE.

The catalysed reaction is acetaldehyde + NAD(+) + CoA = acetyl-CoA + NADH + H(+). It participates in aromatic compound metabolism; 3-phenylpropanoate degradation. Its function is as follows. Catalyzes the conversion of acetaldehyde to acetyl-CoA, using NAD(+) and coenzyme A. Is the final enzyme in the meta-cleavage pathway for the degradation of aromatic compounds. The protein is Acetaldehyde dehydrogenase of Escherichia coli O81 (strain ED1a).